Reading from the N-terminus, the 156-residue chain is Small ribosomal subunit protein uS7 (156 aa).

The protein belongs to the universal ribosomal protein uS7 family. As to quaternary structure, part of the 30S ribosomal subunit. Contacts proteins S9 and S11.

Its function is as follows. One of the primary rRNA binding proteins, it binds directly to 16S rRNA where it nucleates assembly of the head domain of the 30S subunit. Is located at the subunit interface close to the decoding center, probably blocks exit of the E-site tRNA. In Pediococcus pentosaceus (strain ATCC 25745 / CCUG 21536 / LMG 10740 / 183-1w), this protein is Small ribosomal subunit protein uS7.